A 250-amino-acid polypeptide reads, in one-letter code: Triosephosphate isomerase (250 aa).

Residue 9-11 participates in substrate binding; the sequence is NWK. His-95 functions as the Electrophile in the catalytic mechanism. Glu-167 functions as the Proton acceptor in the catalytic mechanism. Substrate contacts are provided by residues Gly-173, Ser-212, and 233 to 234; that span reads GG.

The protein belongs to the triosephosphate isomerase family. In terms of assembly, homodimer.

It localises to the cytoplasm. It catalyses the reaction D-glyceraldehyde 3-phosphate = dihydroxyacetone phosphate. Its pathway is carbohydrate biosynthesis; gluconeogenesis. It participates in carbohydrate degradation; glycolysis; D-glyceraldehyde 3-phosphate from glycerone phosphate: step 1/1. Its function is as follows. Involved in the gluconeogenesis. Catalyzes stereospecifically the conversion of dihydroxyacetone phosphate (DHAP) to D-glyceraldehyde-3-phosphate (G3P). In Endomicrobium trichonymphae, this protein is Triosephosphate isomerase.